A 669-amino-acid polypeptide reads, in one-letter code: MDRTAAQLRIQELHREINRHNYLYYVEDRPEITDAEYDLLLRELQQLEKEFPDLVTADSPTQRVGAAPLDKFNQVSHRLPMLSLENAFNEGEMRDFDERIKRYLGLPMAKEIEYVCEPKMDGLAVELIYEEGSLTFGSTRGDGYVGEDVTQNLKTVKSIPLRLHCSPPPSLVEVRGEVYLGLAPFQKLNMDREEAGLPPFANPRNAAAGSLRQLDPRITARRPLSIFCYAPGLVEGYEFTSQSQMLATLPQWGLPVNPLIKKVAGIDAVLAYYREIGETRESLPYEIDGVVIKVDSFDLQRDLGEKTRSPRWAIAWKFPPRQAVTVVEDIVPQVGRTGVITPVAHLKPVEVSGVMVSRATLHNWEEMEKKDIRKGDTVVVERAGDVIPAVVKVMTEKRLEGAELLAVPAACPECGSEIVKIPGEVAIRCLGLTCPAQIRETIIHFASRHAMDIEGMGDKYVEQLLRLELVKTVADLYYLTKKDFMRFERMGDKLAENLLNAIEASKHRELSRFIFALGIRHVGEHTAKLLASAFGSVEHLEKATEEELLSIREVGPQVAQSVRTFFRNPANREVIERMFAAGVRPAVEEKRLGGRFTGKTFVFTGALTRFTRDDAKNMVENEGGHAAGSVSKKTDYVVAGAEAGSKLDKARQLGVNVLTEDEFLKMLEG.

Residues 34–38 (DAEYD), 83–84 (SL), and glutamate 117 each bind NAD(+). The active-site N6-AMP-lysine intermediate is lysine 119. Residues arginine 140, glutamate 177, lysine 293, and lysine 317 each contribute to the NAD(+) site. Zn(2+) is bound by residues cysteine 411, cysteine 414, cysteine 429, and cysteine 434. Residues 591–669 (RLGGRFTGKT…EDEFLKMLEG (79 aa)) form the BRCT domain.

The protein belongs to the NAD-dependent DNA ligase family. LigA subfamily. Mg(2+) serves as cofactor. Requires Mn(2+) as cofactor.

It carries out the reaction NAD(+) + (deoxyribonucleotide)n-3'-hydroxyl + 5'-phospho-(deoxyribonucleotide)m = (deoxyribonucleotide)n+m + AMP + beta-nicotinamide D-nucleotide.. Its function is as follows. DNA ligase that catalyzes the formation of phosphodiester linkages between 5'-phosphoryl and 3'-hydroxyl groups in double-stranded DNA using NAD as a coenzyme and as the energy source for the reaction. It is essential for DNA replication and repair of damaged DNA. The protein is DNA ligase of Geotalea daltonii (strain DSM 22248 / JCM 15807 / FRC-32) (Geobacter daltonii).